Consider the following 635-residue polypeptide: MGRLLDSIDSPLDLKRLPVDDLPRLCEEIREEIIQTCAKNGGHLGSSLGAVELNVALHYVYSSPTDKLVWDVGHQAYAHKLLTGRRERFRTIRTEGGLAGFPERHESEHDAFGVGHASTAISAALGMLEAKRLSGAPGKVVALVGDGAMTGGVAFEGLNQAGYLGRDLVVVLNDNEMSISPNVGALSEWFSKKFASRTYNRWRRAVKDFLSHVPKGPEAIDMIRHGINATKALVTPGILFEGLGFHYVGPVDGHDVRSLVETLQKLVIFDGPVLLHAITTKGKGYQPAESDKATRGHGLSFFDVATGKPVKKAAAKAYTDLFAEALCEEMERDPRVVAITAAMLEGTGLIKAKQRFPERTYDVGIAEQHAVTFAAGLACEGVRPVVAIYSTFLQRAYDEIIHDVALQRLPVTFALDRGGLVGADGKTHQGAFDVAYLRCVPNLVVMAPSDENELRHMLHTALHHDGPAAFRFPRGAGEGVALEAPQVLPIGKGRLARAVPGKPDVCVVALGTTLHAALAAAEALAKDGVAASVVDARFAKPLDEELIAGEAERARCVVTIEEGCLPGGFGAACLELFERRGLVAEGLRVKRLGLPDEFVTHGDQGRQRAQLGLDADGIARACRAIVGERAKRGAA.

Residues His74 and 115–117 (GHA) each bind thiamine diphosphate. Asp146 contacts Mg(2+). Residues 147–148 (GA), Asn175, Tyr285, and Glu367 contribute to the thiamine diphosphate site. Position 175 (Asn175) interacts with Mg(2+).

This sequence belongs to the transketolase family. DXPS subfamily. Homodimer. Mg(2+) serves as cofactor. Requires thiamine diphosphate as cofactor.

It carries out the reaction D-glyceraldehyde 3-phosphate + pyruvate + H(+) = 1-deoxy-D-xylulose 5-phosphate + CO2. It participates in metabolic intermediate biosynthesis; 1-deoxy-D-xylulose 5-phosphate biosynthesis; 1-deoxy-D-xylulose 5-phosphate from D-glyceraldehyde 3-phosphate and pyruvate: step 1/1. Functionally, catalyzes the acyloin condensation reaction between C atoms 2 and 3 of pyruvate and glyceraldehyde 3-phosphate to yield 1-deoxy-D-xylulose-5-phosphate (DXP). The protein is 1-deoxy-D-xylulose-5-phosphate synthase of Anaeromyxobacter sp. (strain Fw109-5).